We begin with the raw amino-acid sequence, 373 residues long: Response regulator aspartate phosphatase J (373 aa).

2 TPR repeats span residues 99 to 135 (YYFYYFRGMYEFKQKNFILAIDHYKHAEEKLEYVEDE) and 146 to 179 (AEVYYHIKQTYFSMNYASQALDIYTKYELYGRRR). L-glutamyl-L-arginyl-glycyl-L-methionyl-L-threonine is bound by residues Glu-147, Tyr-150, Gln-181, Asp-192, Tyr-217, Asn-225, His-228, Gln-260, Tyr-297, Lys-300, and Asp-335. TPR repeat units follow at residues 220-253 (AAAYYNVGHCKYSLGDYKEAEGYFKTAAAIFEEH) and 259-292 (VQAVFSLTHIYCKEGKYDKAVEAYDRGIKSAAEW). Residues 334 to 367 (EDLLHDTAERFNQLEHYESAAFFYRRLMNIKKKL) form a TPR 5 repeat.

The protein belongs to the Rap family. Monomer in solution. Homodimer.

Its subcellular location is the cytoplasm. With respect to regulation, inhibited in vitro by the competence and sporulation stimulating factor (CSF), encoded by phrC. However, CSF has at least three targets (RapB, RapC, and RapJ) and the physiological importance of RapJ inhibition by CSF is unknown. Interaction with CSF induces a conformational change in RapJ. Involved in the regulation of sporulation. Acts as a phosphatase that specifically dephosphorylates the sporulation initiation phosphotransferase Spo0F and inhibits its activity. The polypeptide is Response regulator aspartate phosphatase J (rapJ) (Bacillus subtilis (strain 168)).